Reading from the N-terminus, the 720-residue chain is uncharacterized protein (720 aa).

Gly-2 carries the N-myristoyl glycine; by host lipid modification.

This is an uncharacterized protein from Cryphonectria parasitica mycoreovirus 1 (strain 9B21) (CpMYRV-1).